The primary structure comprises 278 residues: Prohibitin-7, mitochondrial (278 aa).

At M1–A14 the chain is on the mitochondrial matrix side. The helical; Signal-anchor for type II membrane protein transmembrane segment at L15–Y37 threads the bilayer. Topologically, residues N38 to Q278 are mitochondrial intermembrane. The stretch at K186 to I220 forms a coiled coil.

It belongs to the prohibitin family. As to quaternary structure, component of a prohibitin multimeric complex in mitochondrial membranes.

It localises to the mitochondrion inner membrane. Its function is as follows. Prohibitin probably acts as a holdase/unfoldase for the stabilization of newly synthesized mitochondrial proteins. The sequence is that of Prohibitin-7, mitochondrial (PHB7) from Arabidopsis thaliana (Mouse-ear cress).